The primary structure comprises 343 residues: Homeobox-leucine zipper protein HOX16 (343 aa).

A DNA-binding region (homeobox) is located at residues 74 to 133 (LPEKKRRLTPEQVHLLERSFEEENKLEPERKTELARKLGLQPRQVAVWFQNRRARWKTKQ). Positions 132 to 176 (KQLERDFDRLKASFDALRADHDALLQDNHRLHSQVMSLTEKLQEK) are leucine-zipper. The segment at 218–239 (FEEQQEQQVKAEDRLSTGSGGS) is disordered.

Belongs to the HD-ZIP homeobox family. Class I subfamily. In terms of tissue distribution, expressed in seedlings, stems, leaf sheaths and blades and panicles.

Its subcellular location is the nucleus. Probable transcription factor. In Oryza sativa subsp. japonica (Rice), this protein is Homeobox-leucine zipper protein HOX16 (HOX16).